The chain runs to 72 residues: Cytochrome b-c1 complex subunit 8-2, mitochondrial (72 aa).

Residues 1–41 are Mitochondrial matrix-facing; that stretch reads MGKQPVKLKAVVYALSPFQQKIMTGLWKDLPEKIHHKVSEN. A helical membrane pass occupies residues 42 to 58; that stretch reads WISTILLVAPVVGTYSY. Topologically, residues 59 to 72 are mitochondrial intermembrane; sequence AQYFKEQEKLEHRF.

The protein belongs to the UQCRQ/QCR8 family. In terms of assembly, component of the ubiquinol-cytochrome c oxidoreductase (cytochrome b-c1 complex, complex III, CIII), a multisubunit enzyme composed of 10 subunits. The complex is composed of 3 respiratory subunits cytochrome b (MT-CYB), cytochrome c1 (CYC1-1 or CYC1-2) and Rieske protein (UCR1-1 or UCR1-2), 2 core protein subunits MPPalpha1 (or MPPalpha2) and MPPB, and 5 low-molecular weight protein subunits QCR7-1 (or QCR7-2), UCRQ-1 (or UCRQ-2), QCR9, UCRY and probably QCR6-1 (or QCR6-2). The complex exists as an obligatory dimer and forms supercomplexes (SCs) in the inner mitochondrial membrane with NADH-ubiquinone oxidoreductase (complex I, CI), resulting in different assemblies (supercomplexes SCI(1)III(2) and SCI(2)III(4)).

The protein resides in the mitochondrion inner membrane. Component of the ubiquinol-cytochrome c oxidoreductase, a multisubunit transmembrane complex that is part of the mitochondrial electron transport chain which drives oxidative phosphorylation. The respiratory chain contains 3 multisubunit complexes succinate dehydrogenase (complex II, CII), ubiquinol-cytochrome c oxidoreductase (cytochrome b-c1 complex, complex III, CIII) and cytochrome c oxidase (complex IV, CIV), that cooperate to transfer electrons derived from NADH and succinate to molecular oxygen, creating an electrochemical gradient over the inner membrane that drives transmembrane transport and the ATP synthase. The cytochrome b-c1 complex catalyzes electron transfer from ubiquinol to cytochrome c, linking this redox reaction to translocation of protons across the mitochondrial inner membrane, with protons being carried across the membrane as hydrogens on the quinol. In the process called Q cycle, 2 protons are consumed from the matrix, 4 protons are released into the intermembrane space and 2 electrons are passed to cytochrome c. The sequence is that of Cytochrome b-c1 complex subunit 8-2, mitochondrial (UCRQ-2) from Arabidopsis thaliana (Mouse-ear cress).